Here is a 149-residue protein sequence, read N- to C-terminus: Arginine repressor (149 aa).

This sequence belongs to the ArgR family.

The protein localises to the cytoplasm. The protein operates within amino-acid biosynthesis; L-arginine biosynthesis [regulation]. Functionally, regulates arginine biosynthesis genes. The chain is Arginine repressor from Bacillus pumilus (strain SAFR-032).